Here is a 191-residue protein sequence, read N- to C-terminus: Leucyl/phenylalanyl-tRNA--protein transferase (191 aa).

It belongs to the L/F-transferase family.

It localises to the cytoplasm. It carries out the reaction N-terminal L-lysyl-[protein] + L-leucyl-tRNA(Leu) = N-terminal L-leucyl-L-lysyl-[protein] + tRNA(Leu) + H(+). The catalysed reaction is N-terminal L-arginyl-[protein] + L-leucyl-tRNA(Leu) = N-terminal L-leucyl-L-arginyl-[protein] + tRNA(Leu) + H(+). The enzyme catalyses L-phenylalanyl-tRNA(Phe) + an N-terminal L-alpha-aminoacyl-[protein] = an N-terminal L-phenylalanyl-L-alpha-aminoacyl-[protein] + tRNA(Phe). Functionally, functions in the N-end rule pathway of protein degradation where it conjugates Leu, Phe and, less efficiently, Met from aminoacyl-tRNAs to the N-termini of proteins containing an N-terminal arginine or lysine. The polypeptide is Leucyl/phenylalanyl-tRNA--protein transferase (Nostoc punctiforme (strain ATCC 29133 / PCC 73102)).